We begin with the raw amino-acid sequence, 215 residues long: Probable serine/threonine-protein kinase 2 (215 aa).

Residues 1-205 (MKPEQLVYLN…WLLKEMEQLL (205 aa)) form the Protein kinase domain.

The protein belongs to the protein kinase superfamily. Ser/Thr protein kinase family. In terms of assembly, interacts with the kinase domain of host EIF2AK2.

The protein resides in the host cytoplasm. It catalyses the reaction L-seryl-[protein] + ATP = O-phospho-L-seryl-[protein] + ADP + H(+). It carries out the reaction L-threonyl-[protein] + ATP = O-phospho-L-threonyl-[protein] + ADP + H(+). In terms of biological role, plays a role in the inhibition of host eIF2alpha/EIF2S1 phosphorylation, thereby increasing viral fitness. In the insect host, targets the endogenous insect heme-regulated inhibitor (HRI)-like eIF2alpha kinase. This chain is Probable serine/threonine-protein kinase 2 (PK2), found in Autographa californica nuclear polyhedrosis virus (AcMNPV).